A 596-amino-acid chain; its full sequence is Elongation factor 4 (596 aa).

Positions 2-183 constitute a tr-type G domain; the sequence is ENIRNFCIIA…AIIQRIPPPK (182 aa). GTP is bound by residues 14–19 and 130–133; these read DHGKST and NKID.

The protein belongs to the TRAFAC class translation factor GTPase superfamily. Classic translation factor GTPase family. LepA subfamily.

The protein resides in the cell inner membrane. It carries out the reaction GTP + H2O = GDP + phosphate + H(+). In terms of biological role, required for accurate and efficient protein synthesis under certain stress conditions. May act as a fidelity factor of the translation reaction, by catalyzing a one-codon backward translocation of tRNAs on improperly translocated ribosomes. Back-translocation proceeds from a post-translocation (POST) complex to a pre-translocation (PRE) complex, thus giving elongation factor G a second chance to translocate the tRNAs correctly. Binds to ribosomes in a GTP-dependent manner. The protein is Elongation factor 4 of Cytophaga hutchinsonii (strain ATCC 33406 / DSM 1761 / CIP 103989 / NBRC 15051 / NCIMB 9469 / D465).